Here is a 397-residue protein sequence, read N- to C-terminus: MKKLLKSVLVFAALSSASSLQALPVGNPAEPSLMIDGILWEGFGGDPCDPCTTWCDAISMRVGYYGDFVFDRVLKTDVNKEFQMGAAPTTSDVAGLQNDPTINVARPNPAYGKHMQDAEMFTNAAYMALNIWDRFDVFCTLGATTGYLKGNSASFNLVGLFGTKTQSSSFNTAKLIPNTALNEAVVELYINTTFAWSVGARAALWECGCATLGASFQYAQSKPKVEELNVLCNASEFTINKPKGYVGAEFPLNITAGTEAATGTKDASIDYHEWQASLALSYRLNMFTPYIGVKWSRVSFDADTIRIAQPKLAEAILDVTTLNRTTAGKGSVVSAGTDNELADTMQIVSLQLNKMKSRKSCGIAVGTTIVDADKYAVTVEARLIDERAAHVNAQFRF.

A signal peptide spans 1–22 (MKKLLKSVLVFAALSSASSLQA).

This sequence belongs to the chlamydial porin (CP) (TC 1.B.2) family. In terms of assembly, part of a disulfide cross-linked outer membrane complex (COMC) composed of the major outer membrane porin (MOMP), the small cysteine-rich protein (OmcA) and the large cysteine-rich periplasmic protein (OmcB).

Its subcellular location is the cell outer membrane. In terms of biological role, in elementary bodies (EBs, the infectious stage, which is able to survive outside the host cell) provides the structural integrity of the outer envelope through disulfide cross-links with the small cysteine-rich protein and the large cysteine-rich periplasmic protein. It has been described in publications as the Sarkosyl-insoluble COMC (Chlamydia outer membrane complex), and serves as the functional equivalent of peptidoglycan. Permits diffusion of specific solutes through the outer membrane. The sequence is that of Major outer membrane porin, serovar C (ompA) from Chlamydia trachomatis.